Consider the following 89-residue polypeptide: Small ribosomal subunit protein uS14A (89 aa).

Belongs to the universal ribosomal protein uS14 family. In terms of assembly, part of the 30S ribosomal subunit. Contacts proteins S3 and S10.

In terms of biological role, binds 16S rRNA, required for the assembly of 30S particles and may also be responsible for determining the conformation of the 16S rRNA at the A site. The chain is Small ribosomal subunit protein uS14A from Staphylococcus epidermidis (strain ATCC 35984 / DSM 28319 / BCRC 17069 / CCUG 31568 / BM 3577 / RP62A).